The chain runs to 212 residues: Ribosomal RNA large subunit methyltransferase E (212 aa).

S-adenosyl-L-methionine is bound by residues G56, W58, D78, D94, and D117. K157 acts as the Proton acceptor in catalysis.

This sequence belongs to the class I-like SAM-binding methyltransferase superfamily. RNA methyltransferase RlmE family.

Its subcellular location is the cytoplasm. It carries out the reaction uridine(2552) in 23S rRNA + S-adenosyl-L-methionine = 2'-O-methyluridine(2552) in 23S rRNA + S-adenosyl-L-homocysteine + H(+). Functionally, specifically methylates the uridine in position 2552 of 23S rRNA at the 2'-O position of the ribose in the fully assembled 50S ribosomal subunit. The polypeptide is Ribosomal RNA large subunit methyltransferase E (Ehrlichia chaffeensis (strain ATCC CRL-10679 / Arkansas)).